A 304-amino-acid chain; its full sequence is 33 kDa chaperonin (304 aa).

2 disulfide bridges follow: Cys245/Cys247 and Cys278/Cys281.

The protein belongs to the HSP33 family. In terms of processing, under oxidizing conditions two disulfide bonds are formed involving the reactive cysteines. Under reducing conditions zinc is bound to the reactive cysteines and the protein is inactive.

Its subcellular location is the cytoplasm. Redox regulated molecular chaperone. Protects both thermally unfolding and oxidatively damaged proteins from irreversible aggregation. Plays an important role in the bacterial defense system toward oxidative stress. This Microcystis aeruginosa (strain NIES-843 / IAM M-2473) protein is 33 kDa chaperonin.